Here is a 198-residue protein sequence, read N- to C-terminus: Coagulation factor XIII A chain (198 aa).

The tract at residues 1-36 is disordered; sequence MSESSGTAFGGRRAIPPNTSNAAENDPPTVELQGLV. Residue Ser-2 is modified to N-acetylserine. A propeptide spans 2-38 (activation peptide); it reads SESSGTAFGGRRAIPPNTSNAAENDPPTVELQGLVPR.

This sequence belongs to the transglutaminase superfamily. Transglutaminase family. As to quaternary structure, tetramer of two A chains (F13A1) and two B (F13B) chains. Ca(2+) is required as a cofactor. In terms of processing, the activation peptide is released by thrombin.

It is found in the cytoplasm. The protein resides in the secreted. The catalysed reaction is L-glutaminyl-[protein] + L-lysyl-[protein] = [protein]-L-lysyl-N(6)-5-L-glutamyl-[protein] + NH4(+). Factor XIII is activated by thrombin and calcium ion to a transglutaminase that catalyzes the formation of gamma-glutamyl-epsilon-lysine cross-links between fibrin chains, thus stabilizing the fibrin clot. Also cross-link alpha-2-plasmin inhibitor, or fibronectin, to the alpha chains of fibrin. The chain is Coagulation factor XIII A chain (F13A1) from Bos taurus (Bovine).